Here is a 205-residue protein sequence, read N- to C-terminus: Probable GTP-binding protein EngB (205 aa).

An EngB-type G domain is found at 27 to 201 (SGIEIAFAGR…AAKLDSWFAP (175 aa)). Residues 35 to 42 (GRSNAGKS), 62 to 66 (GRTQL), 80 to 83 (DLPG), 147 to 150 (TKAD), and 180 to 182 (FSA) each bind GTP. Mg(2+) is bound by residues Ser-42 and Thr-64.

The protein belongs to the TRAFAC class TrmE-Era-EngA-EngB-Septin-like GTPase superfamily. EngB GTPase family. It depends on Mg(2+) as a cofactor.

In terms of biological role, necessary for normal cell division and for the maintenance of normal septation. This Pasteurella multocida (strain Pm70) protein is Probable GTP-binding protein EngB.